The sequence spans 136 residues: MVRVARSVNARKKRRSILAAAKGYRGQRSRLYRKAKEQVLRSLVYAYRDRRKRKSNFRKLWIIRINAAARMEGVTYNRFLQGLKLANIELDRRSLAHLAVHNPDTFSALVGVAKDSLKNAPDPVAAARLRGTSSRT.

It belongs to the bacterial ribosomal protein bL20 family.

Binds directly to 23S ribosomal RNA and is necessary for the in vitro assembly process of the 50S ribosomal subunit. It is not involved in the protein synthesizing functions of that subunit. The protein is Large ribosomal subunit protein bL20 of Tropheryma whipplei (strain Twist) (Whipple's bacillus).